A 458-amino-acid polypeptide reads, in one-letter code: UDP-N-acetylmuramate--L-alanine ligase (458 aa).

112-118 is a binding site for ATP; sequence GMHGKTT.

It belongs to the MurCDEF family.

The protein localises to the cytoplasm. It catalyses the reaction UDP-N-acetyl-alpha-D-muramate + L-alanine + ATP = UDP-N-acetyl-alpha-D-muramoyl-L-alanine + ADP + phosphate + H(+). It functions in the pathway cell wall biogenesis; peptidoglycan biosynthesis. In terms of biological role, cell wall formation. The chain is UDP-N-acetylmuramate--L-alanine ligase from Acidobacterium capsulatum (strain ATCC 51196 / DSM 11244 / BCRC 80197 / JCM 7670 / NBRC 15755 / NCIMB 13165 / 161).